The primary structure comprises 516 residues: DNA-(apurinic or apyrimidinic site) endonuclease 2 (516 aa).

Mg(2+)-binding residues include N8 and E47. Y155 is a catalytic residue. Mg(2+) contacts are provided by D196, N198, D302, and H303. Residue D196 is the Proton donor/acceptor of the active site. H303 serves as the catalytic Proton acceptor. Residues 357 to 366 show a composition bias toward polar residues; sequence QPSHQIQAQR. Residues 357–389 are disordered; that stretch reads QPSHQIQAQRQPRKACMHSTRLRKSQGGPKRKQ. Residues 367–389 are compositionally biased toward basic residues; it reads QPRKACMHSTRLRKSQGGPKRKQ. K370 participates in a covalent cross-link: Glycyl lysine isopeptide (Lys-Gly) (interchain with G-Cter in ubiquitin). Residues 389 to 396 form a required for the interaction and colocalization with PCNA in nuclear foci in presence of oxidative-induced DNA damaging agents region; sequence QKNLMSYF. The Zn(2+) site is built by C467, H470, C493, and C507. The segment at 467–516 adopts a GRF-type zinc-finger fold; that stretch reads CGGHREPCVMRTVKKTGPNFGRQFYMCARPRGPPSDPSSRCNFFLWSRPS.

The protein belongs to the DNA repair enzymes AP/ExoA family. As to quaternary structure, interacts with PCNA. This interaction is increased by misincorporation of uracil in nuclear DNA. Requires Mg(2+) as cofactor. It depends on Mn(2+) as a cofactor. In terms of processing, ubiquitinated by the CUL9-RBX1 complex. Ubiquitinated by MKRN3 at Lys-370 leading to proteasomal degradation. In terms of tissue distribution, expressed in lymphocytes, thymocytes and splenocytes (at protein level). Highly expressed in the thymus and weakly expressed in the bone marrow, spleen, eye, kidney, lung, brain and uterus.

The protein resides in the nucleus. Its subcellular location is the cytoplasm. The protein localises to the mitochondrion. It carries out the reaction Exonucleolytic cleavage in the 3'- to 5'-direction to yield nucleoside 5'-phosphates.. Its activity is regulated as follows. 3'-5' exonuclease activity is activated by sodium and manganese. 3'-5' exonuclease and 3'-phosphodiesterase activities are stimulated in presence of PCNA. Functions as a weak apurinic/apyrimidinic (AP) endodeoxyribonuclease in the DNA base excision repair (BER) pathway of DNA lesions induced by oxidative and alkylating agents. Initiates repair of AP sites in DNA by catalyzing hydrolytic incision of the phosphodiester backbone immediately adjacent to the damage, generating a single-strand break with 5'-deoxyribose phosphate and 3'-hydroxyl ends. Also displays double-stranded DNA 3'-5' exonuclease, 3'-phosphodiesterase activities. Shows robust 3'-5' exonuclease activity on 3'-recessed heteroduplex DNA and is able to remove mismatched nucleotides preferentially. Shows fairly strong 3'-phosphodiesterase activity involved in the removal of 3'-damaged termini formed in DNA by oxidative agents. In the nucleus functions in the PCNA-dependent BER pathway. Plays a role in reversing blocked 3' DNA ends, problematic lesions that preclude DNA synthesis. Required for somatic hypermutation (SHM) and DNA cleavage step of class switch recombination (CSR) of immunoglobulin genes. Required for proper cell cycle progression during proliferation of peripheral lymphocytes. In Mus musculus (Mouse), this protein is DNA-(apurinic or apyrimidinic site) endonuclease 2 (Apex2).